Reading from the N-terminus, the 79-residue chain is Acyl carrier protein (79 aa).

The Carrier domain occupies 2–77 (SEIADKVKKI…DAIDYIEKQK (76 aa)). Ser37 bears the O-(pantetheine 4'-phosphoryl)serine mark.

It belongs to the acyl carrier protein (ACP) family. Post-translationally, 4'-phosphopantetheine is transferred from CoA to a specific serine of apo-ACP by AcpS. This modification is essential for activity because fatty acids are bound in thioester linkage to the sulfhydryl of the prosthetic group.

The protein resides in the cytoplasm. Its pathway is lipid metabolism; fatty acid biosynthesis. Carrier of the growing fatty acid chain in fatty acid biosynthesis. The chain is Acyl carrier protein from Gluconacetobacter diazotrophicus (strain ATCC 49037 / DSM 5601 / CCUG 37298 / CIP 103539 / LMG 7603 / PAl5).